Consider the following 416-residue polypeptide: Adenylosuccinate synthetase (416 aa).

GTP is bound by residues 12 to 18 (GDEGKGK) and 40 to 42 (GHT). Catalysis depends on D13, which acts as the Proton acceptor. Residues D13 and G40 each coordinate Mg(2+). IMP contacts are provided by residues 13-16 (DEGK), 38-41 (NAGH), T125, R139, Q220, T235, and R299. The active-site Proton donor is H41. 295–301 (TTTGRPR) serves as a coordination point for substrate. GTP-binding positions include R301, 327–329 (KLD), and 405–407 (STS).

It belongs to the adenylosuccinate synthetase family. Homodimer. Requires Mg(2+) as cofactor.

It localises to the cytoplasm. It carries out the reaction IMP + L-aspartate + GTP = N(6)-(1,2-dicarboxyethyl)-AMP + GDP + phosphate + 2 H(+). Its pathway is purine metabolism; AMP biosynthesis via de novo pathway; AMP from IMP: step 1/2. Functionally, plays an important role in the de novo pathway of purine nucleotide biosynthesis. Catalyzes the first committed step in the biosynthesis of AMP from IMP. This Nitratiruptor sp. (strain SB155-2) protein is Adenylosuccinate synthetase.